Consider the following 456-residue polypeptide: Tyrosinase-like protein (456 aa).

A signal peptide spans 1–22 (MNTMTLLGKVFLLQFLIGVGFC). Residues H145, H154, H163, H295, H299, and H322 each contribute to the Cu cation site.

This sequence belongs to the tyrosinase family. The cofactor is Cu(2+). Prismatic layer of shell (at protein level).

It localises to the secreted. The protein is Tyrosinase-like protein of Pinctada maxima (Silver-lipped pearl oyster).